The sequence spans 242 residues: 7-cyano-7-deazaguanine synthase (242 aa).

The tract at residues 1–25 (MNSRKDKNSKGKNSDTKRKKSSQEN) is disordered. Residue 32-42 (LSGGLDSTTCL) participates in ATP binding. Residues Cys212, Cys221, Cys224, and Cys227 each coordinate Zn(2+).

The protein belongs to the QueC family. The cofactor is Zn(2+).

It carries out the reaction 7-carboxy-7-deazaguanine + NH4(+) + ATP = 7-cyano-7-deazaguanine + ADP + phosphate + H2O + H(+). Its pathway is purine metabolism; 7-cyano-7-deazaguanine biosynthesis. Catalyzes the ATP-dependent conversion of 7-carboxy-7-deazaguanine (CDG) to 7-cyano-7-deazaguanine (preQ(0)). The polypeptide is 7-cyano-7-deazaguanine synthase (Leptospira borgpetersenii serovar Hardjo-bovis (strain JB197)).